We begin with the raw amino-acid sequence, 136 residues long: Putative nickel-responsive regulator (136 aa).

Ni(2+)-binding residues include His-76, His-87, His-89, and Cys-95.

Belongs to the transcriptional regulatory CopG/NikR family. Ni(2+) serves as cofactor.

Transcriptional regulator. The sequence is that of Putative nickel-responsive regulator from Desulfotalea psychrophila (strain LSv54 / DSM 12343).